The sequence spans 831 residues: Periplasmic nitrate reductase (831 aa).

A signal peptide (tat-type signal) is located at residues 1–29 (MTLSRRDFIKQTAVAATASVAGVTLPAGA). Residues 41–97 (LKWSKAPCRFCGTGCGVTVAVRDNKVVATNGDPQAEVNKGLNCVKGYFLSKIMYGQD) enclose the 4Fe-4S Mo/W bis-MGD-type domain. Positions 48, 51, 55, and 83 each coordinate [4Fe-4S] cluster. Mo-bis(molybdopterin guanine dinucleotide) is bound by residues K85, Q152, N177, C181, 214 to 221 (WGSNMAEM), 245 to 249 (STFTH), 264 to 266 (QTD), M375, Q379, N485, 511 to 512 (SD), K534, D561, and 721 to 730 (TGRVLEHWHS). W797 serves as a coordination point for substrate. N805 and K822 together coordinate Mo-bis(molybdopterin guanine dinucleotide).

Belongs to the prokaryotic molybdopterin-containing oxidoreductase family. NasA/NapA/NarB subfamily. As to quaternary structure, component of the periplasmic nitrate reductase NapAB complex composed of NapA and NapB. Requires [4Fe-4S] cluster as cofactor. Mo-bis(molybdopterin guanine dinucleotide) serves as cofactor. Predicted to be exported by the Tat system. The position of the signal peptide cleavage has not been experimentally proven.

It localises to the periplasm. The catalysed reaction is 2 Fe(II)-[cytochrome] + nitrate + 2 H(+) = 2 Fe(III)-[cytochrome] + nitrite + H2O. Its function is as follows. Catalytic subunit of the periplasmic nitrate reductase complex NapAB. Receives electrons from NapB and catalyzes the reduction of nitrate to nitrite. The protein is Periplasmic nitrate reductase of Cupriavidus taiwanensis (strain DSM 17343 / BCRC 17206 / CCUG 44338 / CIP 107171 / LMG 19424 / R1) (Ralstonia taiwanensis (strain LMG 19424)).